The following is a 484-amino-acid chain: Glutamyl-tRNA(Gln) amidotransferase subunit A (484 aa).

Residues lysine 78 and serine 153 each act as charge relay system in the active site. The active-site Acyl-ester intermediate is serine 177.

Belongs to the amidase family. GatA subfamily. As to quaternary structure, heterotrimer of A, B and C subunits.

The catalysed reaction is L-glutamyl-tRNA(Gln) + L-glutamine + ATP + H2O = L-glutaminyl-tRNA(Gln) + L-glutamate + ADP + phosphate + H(+). In terms of biological role, allows the formation of correctly charged Gln-tRNA(Gln) through the transamidation of misacylated Glu-tRNA(Gln) in organisms which lack glutaminyl-tRNA synthetase. The reaction takes place in the presence of glutamine and ATP through an activated gamma-phospho-Glu-tRNA(Gln). In Thermodesulfovibrio yellowstonii (strain ATCC 51303 / DSM 11347 / YP87), this protein is Glutamyl-tRNA(Gln) amidotransferase subunit A.